A 664-amino-acid chain; its full sequence is Metal-nicotianamine transporter YSL2 (664 aa).

Transmembrane regions (helical) follow at residues 31–51 (ITVRAIVASLLIGIVYSVICL), 55–75 (LTTGLVPNLNISSALLAFVFL), 103–123 (CAVACYSISLAGGFASYLLGL), 147–167 (GVGWMTSFLFVTSFIGLVVLV), 209–229 (GFIKSFGLSFFWAFFGWFYSG), 268–288 (LVNLSLLFGAILSWGIMWPLI), 314–334 (FICIALILGDGLYNFVKILFF), 378–398 (IPLWMACVGYLFFSLVSIIAI), 409–429 (FVLVAYLLAPSLSFCNAYGAG), 457–477 (VVAGMVACGLIKSIVSVSADL), 496–516 (VAQAIGTAIGCVVAPLTFFLF), 549–569 (SALPKHCLELCYGFFAFAVAA), 594–614 (FLVGGSFAIDMCIGSLVVYVW), and 629–649 (VASGLICGDGLWILPSSLLAL).

It belongs to the YSL (TC 2.A.67.2) family. In terms of tissue distribution, expressed in roots, leaves and weakly in shoots. Restricted to the veins, to the central cylinder of the young roots and to the pericycle and the endodermis cells facing the meta-xylem tubes in older roots. Expressed in the vasculature of sepals, petals, anthers, stigma and siliques, but not in developing seeds or in meristematic zones.

It localises to the cell membrane. May be involved in the lateral transport of nicotianamine-chelated metals in the vasculature. The sequence is that of Metal-nicotianamine transporter YSL2 (YSL2) from Arabidopsis thaliana (Mouse-ear cress).